A 471-amino-acid chain; its full sequence is Fructokinase-like 1, chloroplastic (471 aa).

Residues 1 to 38 constitute a chloroplast transit peptide; it reads MASLLIFPHLHHFDSSLDRREVLVVRHSQASRRFLTPK. The segment at 36 to 85 is disordered; it reads TPKASINGSGITNGAAAETTSKPSRKGRKKKQTSTVIEKDNTETDPELNP. Positions 39 to 57 are enriched in polar residues; sequence ASINGSGITNGAAAETTSK. The span at 58–67 shows a compositional bias: basic residues; sequence PSRKGRKKKQ.

This sequence belongs to the carbohydrate kinase PfkB family. Interacts with CITRX/TRXz. Interacts with PTAC7. Self-interacts. Binds to FLN2. Associates with the plastid-encoded RNA polymerase (PEP) complex.

The protein localises to the plastid. Its subcellular location is the chloroplast. Required for proper chloroplast development, most likely through regulating plastid-encoded polymerase (PEP) dependent chloroplast transcription. Acts as a component of the transcriptionally active plastid chromosome that is required for plastid gene expression. The protein is Fructokinase-like 1, chloroplastic of Arabidopsis thaliana (Mouse-ear cress).